A 315-amino-acid chain; its full sequence is Calumenin (315 aa).

Residues 1–19 (MDLRQFLMCLSLCTAFALS) form the signal peptide. At Ser44 the chain carries Phosphoserine. Residue Tyr47 is modified to Phosphotyrosine. Thr65 is subject to Phosphothreonine. EF-hand domains lie at 68–103 (ESKERLGKIVSKIDGDKDGFVTVDELKDWIKFAQKR), 104–139 (WIYEDVERQWKGHDLNEDGLVSWEEYKNATYGYVLD), 151–186 (QMMVRDERRFKMADKDGDLIATKEEFTAFLHPEEYD), 188–223 (MKDIVVQETMEDIDKNADGFIDLEEYIGDMYSHDGN), 229–264 (WVKTEREQFVEFRDKNRDGKMDKEETKDWILPSDYD), and 265–300 (HAEAEARHLVYESDQNKDGKLTKEEIVDKYDLFVGS). Residue Ser69 is modified to Phosphoserine; by FAM20C. Positions 81, 83, 85, 92, 117, 119, 121, and 128 each coordinate Ca(2+). The N-linked (GlcNAc...) (complex) asparagine glycan is linked to Asn131. Residue Asp164 coordinates Ca(2+). An N6-acetyllysine modification is found at Lys165. Ca(2+) contacts are provided by Asp166, Asp168, Glu175, Asp201, Asn203, Asp205, Glu212, Asp242, Asn244, Asp246, Lys248, and Glu253. Thr254 carries the post-translational modification Phosphothreonine. Phosphoserine occurs at positions 261 and 277. The Ca(2+) site is built by Asp278, Asn280, Asp282, Lys284, and Glu289. Positions 312 to 315 (HDEF) match the Prevents secretion from ER motif.

Belongs to the CREC family. Interacts with GGCX. Ubiquitously expressed. Expressed at high levels in heart, placenta and skeletal muscle, at lower levels in lung, kidney and pancreas and at very low levels in brain and liver.

The protein localises to the endoplasmic reticulum membrane. It localises to the golgi apparatus. It is found in the secreted. Its subcellular location is the melanosome. The protein resides in the sarcoplasmic reticulum lumen. Involved in regulation of vitamin K-dependent carboxylation of multiple N-terminal glutamate residues. Seems to inhibit gamma-carboxylase GGCX. Binds 7 calcium ions with a low affinity. This is Calumenin (CALU) from Homo sapiens (Human).